The following is a 227-amino-acid chain: Urease accessory protein UreF (227 aa).

The protein belongs to the UreF family. As to quaternary structure, ureD, UreF and UreG form a complex that acts as a GTP-hydrolysis-dependent molecular chaperone, activating the urease apoprotein by helping to assemble the nickel containing metallocenter of UreC. The UreE protein probably delivers the nickel.

It is found in the cytoplasm. Its function is as follows. Required for maturation of urease via the functional incorporation of the urease nickel metallocenter. This is Urease accessory protein UreF from Bacillus sp. (strain TB-90).